A 421-amino-acid chain; its full sequence is Zinc chaperone AztD (421 aa).

A signal peptide spans 1–29 (MMENIMKKRLLSTSISTLLLGLSVMPAFA). Positions 101, 104, 106, 126, 169, 216, and 405 each coordinate Zn(2+). A disulfide bridge links Cys-212 with Cys-229. Positions 399–421 (GGSGKVHGEHHDHEAHHHDDHAH) are disordered. Positions 404-421 (VHGEHHDHEAHHHDDHAH) are enriched in basic and acidic residues. The N-terminal Zn(2+)-binding motif; binds a third Zn(2+) with low affinity signature appears at 408–419 (HHDHEAHHHDDH).

In terms of assembly, monomer.

It localises to the periplasm. Functionally, acts as a zinc chaperone in the AztABCD zinc transport system. Directly transfers one zinc cation to the solute binding protein AztC; the transfer occurs without the formation of a stable interaction. Binds 3 Zn(2+), two with high affinity and one with low affinity, and transfers only Zn(2+) bound to site 2 to AztC. This chain is Zinc chaperone AztD, found in Citrobacter koseri (strain ATCC BAA-895 / CDC 4225-83 / SGSC4696).